The primary structure comprises 911 residues: Transcription factor E2F7 (911 aa).

S94 is subject to Phosphoserine. The DNA-binding element occupies 141–210; the sequence is RKQKSLGLLC…VAKNQYSWHG (70 aa). Disordered stretches follow at residues 239–281, 409–433, and 565–706; these read QKEL…ANSR, SFNS…PYRQ, and SPGS…SPLQ. The span at 243 to 257 shows a compositional bias: basic and acidic residues; that stretch reads NPIDHKSGERRRDGC. The DNA-binding element occupies 281-366; the sequence is RKDKSLKIMS…GRKPAFKWIG (86 aa). Residue S409 is modified to Phosphoserine. The segment covering 415-424 has biased composition (basic and acidic residues); sequence ASERTQRKVN. Residues 566-579 are compositionally biased toward gly residues; it reads PGSGSGSGSVGGGS. Residues 599–621 show a composition bias toward basic and acidic residues; sequence ERRLQEEEEEPATKRQCRDHEDG. The span at 669–687 shows a compositional bias: polar residues; that stretch reads KATTNGFVSSEWGNPCSNT. Residues 688-698 are compositionally biased toward basic and acidic residues; the sequence is EIEKPSEENES. Phosphoserine is present on S840. The interval 873 to 911 is disordered; that stretch reads FFKTPGSLGDPVLRRKERNQSRSSSSAQRRLEISSGGTD.

This sequence belongs to the E2F/DP family. As to quaternary structure, homodimer and heterodimer: mainly forms homodimers and, to a lesser extent, heterodimers with E2F8. Dimerization is important for DNA-binding. Interacts with HIF1A. Interacts with MN1.

It localises to the nucleus. Atypical E2F transcription factor that participates in various processes such as angiogenesis, polyploidization of specialized cells and DNA damage response. Mainly acts as a transcription repressor that binds DNA independently of DP proteins and specifically recognizes the E2 recognition site 5'-TTTC[CG]CGC-3'. Directly represses transcription of classical E2F transcription factors such as E2F1. Acts as a regulator of S-phase by recognizing and binding the E2-related site 5'-TTCCCGCC-3' and mediating repression of G1/S-regulated genes. Plays a key role in polyploidization of cells in placenta and liver by regulating the endocycle, probably by repressing genes promoting cytokinesis and antagonizing action of classical E2F proteins (E2F1, E2F2 and/or E2F3). Required for placental development by promoting polyploidization of trophoblast giant cells. Also involved in DNA damage response: up-regulated by p53/TP53 following genotoxic stress and acts as a downstream effector of p53/TP53-dependent repression by mediating repression of indirect p53/TP53 target genes involved in DNA replication. Acts as a promoter of sprouting angiogenesis, possibly by acting as a transcription activator: associates with HIF1A, recognizes and binds the VEGFA promoter, which is different from canonical E2 recognition site, and activates expression of the VEGFA gene. Acts as a negative regulator of keratinocyte differentiation. The protein is Transcription factor E2F7 (E2F7) of Bos taurus (Bovine).